A 969-amino-acid chain; its full sequence is Leucine--tRNA ligase (969 aa).

The interval 1–23 is disordered; it reads MTESPTTSPATGSGAAAPDSDAP. The 'HIGH' region motif lies at 78 to 89; sequence PYPSGEGLHVGH. Positions 737–741 match the 'KMSKS' region motif; that stretch reads KIGKS. Lys-740 is a binding site for ATP.

It belongs to the class-I aminoacyl-tRNA synthetase family.

Its subcellular location is the cytoplasm. The enzyme catalyses tRNA(Leu) + L-leucine + ATP = L-leucyl-tRNA(Leu) + AMP + diphosphate. In Mycolicibacterium paratuberculosis (strain ATCC BAA-968 / K-10) (Mycobacterium paratuberculosis), this protein is Leucine--tRNA ligase.